Consider the following 322-residue polypeptide: Epoxide hydrolase A (322 aa).

Residues 27-131 form the AB hydrolase-1 domain; sequence PVVILAHGFP…AVAALSVPAL (105 aa). Aspartate 103 serves as the catalytic Nucleophile. The active-site Proton acceptor is histidine 298.

This sequence belongs to the AB hydrolase superfamily. Epoxide hydrolase family. As to quaternary structure, homodimer.

The catalysed reaction is an epoxide + H2O = an ethanediol. In terms of biological role, could be involved in detoxification of extraneous host-cell epoxides. Catalyzes the hydrolysis of epoxide-containing substrates. This is Epoxide hydrolase A (ephA) from Mycobacterium tuberculosis (strain ATCC 25618 / H37Rv).